A 529-amino-acid polypeptide reads, in one-letter code: Bifunctional purine biosynthesis protein PurH (529 aa).

One can recognise an MGS-like domain in the interval 1–148; sequence MQQRRPVRRA…KNHKDVAIVV (148 aa).

This sequence belongs to the PurH family.

It catalyses the reaction (6R)-10-formyltetrahydrofolate + 5-amino-1-(5-phospho-beta-D-ribosyl)imidazole-4-carboxamide = 5-formamido-1-(5-phospho-D-ribosyl)imidazole-4-carboxamide + (6S)-5,6,7,8-tetrahydrofolate. The catalysed reaction is IMP + H2O = 5-formamido-1-(5-phospho-D-ribosyl)imidazole-4-carboxamide. It functions in the pathway purine metabolism; IMP biosynthesis via de novo pathway; 5-formamido-1-(5-phospho-D-ribosyl)imidazole-4-carboxamide from 5-amino-1-(5-phospho-D-ribosyl)imidazole-4-carboxamide (10-formyl THF route): step 1/1. It participates in purine metabolism; IMP biosynthesis via de novo pathway; IMP from 5-formamido-1-(5-phospho-D-ribosyl)imidazole-4-carboxamide: step 1/1. This Salmonella dublin (strain CT_02021853) protein is Bifunctional purine biosynthesis protein PurH.